Consider the following 211-residue polypeptide: Probable GTP-binding protein EngB (211 aa).

The region spanning 30-204 (EGFEVAFAGR…YTVLAGWMEL (175 aa)) is the EngB-type G domain. GTP-binding positions include 38–45 (GRSNAGKS), 64–68 (GRTQL), 82–85 (DLPG), 149–152 (TKAD), and 182–185 (LFSA). S45 and T66 together coordinate Mg(2+).

The protein belongs to the TRAFAC class TrmE-Era-EngA-EngB-Septin-like GTPase superfamily. EngB GTPase family. The cofactor is Mg(2+).

In terms of biological role, necessary for normal cell division and for the maintenance of normal septation. This chain is Probable GTP-binding protein EngB, found in Pseudomonas syringae pv. tomato (strain ATCC BAA-871 / DC3000).